The chain runs to 280 residues: Pantothenate synthetase (280 aa).

An ATP-binding site is contributed by 30 to 37 (MGALHEGH). The Proton donor role is filled by His-37. Gln-61 contributes to the (R)-pantoate binding site. Gln-61 contacts beta-alanine. 147 to 150 (GQKD) contributes to the ATP binding site. Gln-153 lines the (R)-pantoate pocket. ATP contacts are provided by residues Val-176 and 184–187 (MSSR).

It belongs to the pantothenate synthetase family. As to quaternary structure, homodimer.

It localises to the cytoplasm. The catalysed reaction is (R)-pantoate + beta-alanine + ATP = (R)-pantothenate + AMP + diphosphate + H(+). The protein operates within cofactor biosynthesis; (R)-pantothenate biosynthesis; (R)-pantothenate from (R)-pantoate and beta-alanine: step 1/1. Functionally, catalyzes the condensation of pantoate with beta-alanine in an ATP-dependent reaction via a pantoyl-adenylate intermediate. The chain is Pantothenate synthetase from Thermodesulfovibrio yellowstonii (strain ATCC 51303 / DSM 11347 / YP87).